The primary structure comprises 328 residues: Pantothenate kinase (328 aa).

A compositionally biased stretch (polar residues) spans 1–12 (MAAPLNAQTRAP). The interval 1 to 22 (MAAPLNAQTRAPQATGRAPDFS) is disordered. 113–120 (GSVAVGKS) is an ATP binding site.

It belongs to the prokaryotic pantothenate kinase family.

It localises to the cytoplasm. It catalyses the reaction (R)-pantothenate + ATP = (R)-4'-phosphopantothenate + ADP + H(+). Its pathway is cofactor biosynthesis; coenzyme A biosynthesis; CoA from (R)-pantothenate: step 1/5. The chain is Pantothenate kinase from Corynebacterium efficiens (strain DSM 44549 / YS-314 / AJ 12310 / JCM 11189 / NBRC 100395).